A 433-amino-acid chain; its full sequence is Homogentisate 1,2-dioxygenase (433 aa).

His-288 (proton acceptor) is an active-site residue. Residues His-331 and Glu-337 each coordinate Fe cation. The homogentisate site is built by Tyr-346 and His-367. Position 367 (His-367) interacts with Fe cation.

Belongs to the homogentisate dioxygenase family. As to quaternary structure, hexamer; dimer of trimers. It depends on Fe cation as a cofactor.

The catalysed reaction is homogentisate + O2 = 4-maleylacetoacetate + H(+). Its pathway is amino-acid degradation; L-phenylalanine degradation; acetoacetate and fumarate from L-phenylalanine: step 4/6. Its function is as follows. Involved in the catabolism of homogentisate (2,5-dihydroxyphenylacetate or 2,5-OH-PhAc), a central intermediate in the degradation of phenylalanine and tyrosine. Catalyzes the oxidative ring cleavage of the aromatic ring of homogentisate to yield maleylacetoacetate. The polypeptide is Homogentisate 1,2-dioxygenase (Pseudomonas putida (strain GB-1)).